Consider the following 172-residue polypeptide: 3-hydroxydecanoyl-[acyl-carrier-protein] dehydratase (172 aa).

The active site involves H71.

This sequence belongs to the thioester dehydratase family. FabA subfamily. Homodimer.

The protein resides in the cytoplasm. The enzyme catalyses a (3R)-hydroxyacyl-[ACP] = a (2E)-enoyl-[ACP] + H2O. It carries out the reaction (3R)-hydroxydecanoyl-[ACP] = (2E)-decenoyl-[ACP] + H2O. The catalysed reaction is (2E)-decenoyl-[ACP] = (3Z)-decenoyl-[ACP]. It participates in lipid metabolism; fatty acid biosynthesis. Its function is as follows. Necessary for the introduction of cis unsaturation into fatty acids. Catalyzes the dehydration of (3R)-3-hydroxydecanoyl-ACP to E-(2)-decenoyl-ACP and then its isomerization to Z-(3)-decenoyl-ACP. Can catalyze the dehydratase reaction for beta-hydroxyacyl-ACPs with saturated chain lengths up to 16:0, being most active on intermediate chain length. The chain is 3-hydroxydecanoyl-[acyl-carrier-protein] dehydratase from Brucella abortus (strain S19).